An 831-amino-acid polypeptide reads, in one-letter code: Protein ADP-ribosyltransferase PARP3 (831 aa).

Residues 1 to 69 are disordered; it reads MVHETRSRTL…KKLKAEESDL (69 aa). Basic and acidic residues-rich tracts occupy residues 15 to 32 and 43 to 66; these read EEGK…KEQE and KTAD…KAEE. The region spanning 49 to 199 is the PADR1 zinc-binding domain; the sequence is EHDGEQEPSK…NKYPKRNLDD (151 aa). Residues 124–168 are zinc ribbon; it reads GPLDKCPVCGGQLECKGLKYNCTGTHSEWACCSFSTNNPSRRGGP. Residues Cys-129, Cys-132, Cys-145, and Cys-155 each contribute to the Zn(2+) site. Residues 200–290 enclose the BRCT domain; it reads EGIFSGMMIA…EKQPLAAYDI (91 aa). The 102-residue stretch at 338-439 folds into the WGR domain; it reads GGHIYEKDGI…KKFKKKCMKM (102 aa). In terms of domain architecture, PARP alpha-helical spans 466–585; that stretch reads HCKLDPSVTF…DINVASRLIG (120 aa). Residues 594-827 enclose the PARP catalytic domain; it reads DPLSQCYKKL…VKYEEQNMEV (234 aa).

This sequence belongs to the ARTD/PARP family.

Its subcellular location is the nucleus. It carries out the reaction L-aspartyl-[protein] + NAD(+) = 4-O-(ADP-D-ribosyl)-L-aspartyl-[protein] + nicotinamide. The enzyme catalyses L-glutamyl-[protein] + NAD(+) = 5-O-(ADP-D-ribosyl)-L-glutamyl-[protein] + nicotinamide. Involved in the base excision repair (BER) pathway, by catalyzing the poly(ADP-ribosyl)ation of a limited number of acceptor proteins involved in chromatin architecture and in DNA metabolism. This modification follows DNA damages and appears as an obligatory step in a detection/signaling pathway leading to the reparation of DNA strand breaks. This Oryza sativa subsp. japonica (Rice) protein is Protein ADP-ribosyltransferase PARP3 (PARP3).